Reading from the N-terminus, the 184-residue chain is Photosystem I assembly protein Ycf4 (184 aa).

A run of 2 helical transmembrane segments spans residues 19 to 39 and 57 to 77; these read ISNF…VLVG and ILFF…LFIS.

This sequence belongs to the Ycf4 family.

It localises to the plastid. The protein resides in the chloroplast thylakoid membrane. Its function is as follows. Seems to be required for the assembly of the photosystem I complex. This chain is Photosystem I assembly protein Ycf4, found in Eucalyptus globulus subsp. globulus (Tasmanian blue gum).